A 423-amino-acid chain; its full sequence is tRNA(Met) cytidine acetate ligase (423 aa).

ATP is bound by residues 7–20 (VVEY…HLYH), Gly102, Asn165, and Arg190.

It belongs to the TmcAL family.

It localises to the cytoplasm. The catalysed reaction is cytidine(34) in elongator tRNA(Met) + acetate + ATP = N(4)-acetylcytidine(34) in elongator tRNA(Met) + AMP + diphosphate. Functionally, catalyzes the formation of N(4)-acetylcytidine (ac(4)C) at the wobble position of elongator tRNA(Met), using acetate and ATP as substrates. First activates an acetate ion to form acetyladenylate (Ac-AMP) and then transfers the acetyl group to tRNA to form ac(4)C34. This Thermosipho africanus (strain TCF52B) protein is tRNA(Met) cytidine acetate ligase.